Reading from the N-terminus, the 729-residue chain is Adenosylcobalamin-dependent ribonucleoside-triphosphate reductase (729 aa).

An intrachain disulfide couples C189 to C438. Active-site residues include C427 and E429.

It belongs to the class II ribonucleoside-triphosphate reductase family. As to quaternary structure, monomer. It depends on adenosylcob(III)alamin as a cofactor.

The enzyme catalyses a 2'-deoxyribonucleoside 5'-triphosphate + [thioredoxin]-disulfide + H2O = a ribonucleoside 5'-triphosphate + [thioredoxin]-dithiol. The sequence is that of Adenosylcobalamin-dependent ribonucleoside-triphosphate reductase (rnr) from Euglena gracilis.